The chain runs to 294 residues: MNIKVSLLFILPIFLLLLTSKVKAGDIVVYWGQDVGEGKLIDTCNSGLYNIVNIAFLSSFGNFQTPKLNLAGHCEPSSGGCQQLTKSIRHCQSIGIKIMLSIGGGTPTYTLSSVDDARQVADYLWNNFLGGQSSFRPLGDAVLDGIDFDIELGQPHYIALARRLSEHGQQGKKLYLTAAPQCPFPDKLLNGALQTGLFDYVWVQFYNNPECEFMSNSENFKRRWNQWTSIPAKKLYIGLPAAKTAAGNGYIPKQVLMSQVLPFLKGSSKYGGVMLWNRKFDVQCGYSSAIRGAV.

Positions 1-24 (MNIKVSLLFILPIFLLLLTSKVKA) are cleaved as a signal peptide. The region spanning 25 to 294 (GDIVVYWGQD…GYSSAIRGAV (270 aa)) is the GH18 domain. 2 cysteine pairs are disulfide-bonded: Cys-44–Cys-91 and Cys-74–Cys-81. Glu-151 serves as the catalytic Proton donor. Cysteines 182 and 211 form a disulfide.

This sequence belongs to the glycosyl hydrolase 18 family. Chitinase class II subfamily.

The enzyme catalyses Random endo-hydrolysis of N-acetyl-beta-D-glucosaminide (1-&gt;4)-beta-linkages in chitin and chitodextrins.. This protein functions as a defense against chitin containing fungal pathogens. This Nicotiana tabacum (Common tobacco) protein is Basic endochitinase.